Consider the following 1604-residue polypeptide: Transposon Ty1-DR4 Gag-Pol polyprotein (1604 aa).

Polar residues-rich tracts occupy residues 1 to 23 (MESQQLSQHSPISHGSACASVTS), 48 to 60 (TKANSQQTTTPAS), and 127 to 152 (QSQFPQYPSSVGTPLSTPSPESGNTF). Disordered regions lie at residues 1–93 (MESQ…MMTQ), 126–174 (PQSQ…PPPM), and 352–421 (GSRN…SKST). The span at 153–165 (TDSSSADSDMTST) shows a compositional bias: low complexity. The tract at residues 299–401 (NNGIHINNKV…NSKSKTARAH (103 aa)) is RNA-binding. Residues 402 to 418 (NVSTSNNSPSTDNDSIS) are compositionally biased toward low complexity. Ser-416 is modified (phosphoserine). Asp-461 serves as the catalytic For protease activity; shared with dimeric partner. The tract at residues 583 to 640 (NVHTSESTRKYPYPFIHRMLAHANAQTIRYSLKNNTITYFNESDVDWSSAIDYQCPDC) is integrase-type zinc finger-like. Residues 660-835 (NSYEPFQYLH…AGLDISTLLP (176 aa)) enclose the Integrase catalytic domain. Mg(2+) contacts are provided by Asp-671 and Asp-736. Disordered stretches follow at residues 956 to 1087 (SKAV…ETEK), 1092 to 1111 (RSPSIDASPPENNSSHNIVP), and 1130 to 1187 (DLPL…DNET). Residues 960–969 (SPTDSTPPST) show a composition bias toward low complexity. The span at 1005-1015 (STPQISNIEST) shows a compositional bias: polar residues. The span at 1038 to 1053 (ESSHASKSKDFRHSDS) shows a compositional bias: basic and acidic residues. Composition is skewed to polar residues over residues 1054 to 1082 (YSENETNHTNVPISSTGGTNNKTVPQISD) and 1101 to 1111 (PENNSSHNIVP). The Bipartite nuclear localization signal motif lies at 1178-1212 (KKRSLEDNETEIKVSRDTWNTKNMRSLEPPRSKKR). The Reverse transcriptase Ty1/copia-type domain occupies 1338 to 1476 (NNYYITQLDI…DILGLEIKYQ (139 aa)). The Mg(2+) site is built by Asp-1346, Asp-1427, and Asp-1428.

In terms of assembly, the capsid protein forms a homotrimer, from which the VLPs are assembled. The protease is a homodimer, whose active site consists of two apposed aspartic acid residues. Post-translationally, initially, virus-like particles (VLPs) are composed of the structural unprocessed proteins Gag and Gag-Pol, and also contain the host initiator methionine tRNA (tRNA(i)-Met) which serves as a primer for minus-strand DNA synthesis, and a dimer of genomic Ty RNA. Processing of the polyproteins occurs within the particle and proceeds by an ordered pathway, called maturation. First, the protease (PR) is released by autocatalytic cleavage of the Gag-Pol polyprotein yielding capsid protein p45 and a Pol-p154 precursor protein. This cleavage is a prerequisite for subsequent processing of Pol-p154 at the remaining sites to release the mature structural and catalytic proteins. Maturation takes place prior to the RT reaction and is required to produce transposition-competent VLPs.

The protein localises to the cytoplasm. Its subcellular location is the nucleus. The catalysed reaction is DNA(n) + a 2'-deoxyribonucleoside 5'-triphosphate = DNA(n+1) + diphosphate. The enzyme catalyses Endonucleolytic cleavage to 5'-phosphomonoester.. Functionally, capsid protein (CA) is the structural component of the virus-like particle (VLP), forming the shell that encapsulates the retrotransposons dimeric RNA genome. The particles are assembled from trimer-clustered units and there are holes in the capsid shells that allow for the diffusion of macromolecules. CA also has nucleocapsid-like chaperone activity, promoting primer tRNA(i)-Met annealing to the multipartite primer-binding site (PBS), dimerization of Ty1 RNA and initiation of reverse transcription. Its function is as follows. The aspartyl protease (PR) mediates the proteolytic cleavages of the Gag and Gag-Pol polyproteins after assembly of the VLP. In terms of biological role, reverse transcriptase/ribonuclease H (RT) is a multifunctional enzyme that catalyzes the conversion of the retro-elements RNA genome into dsDNA within the VLP. The enzyme displays a DNA polymerase activity that can copy either DNA or RNA templates, and a ribonuclease H (RNase H) activity that cleaves the RNA strand of RNA-DNA heteroduplexes during plus-strand synthesis and hydrolyzes RNA primers. The conversion leads to a linear dsDNA copy of the retrotransposon that includes long terminal repeats (LTRs) at both ends. Integrase (IN) targets the VLP to the nucleus, where a subparticle preintegration complex (PIC) containing at least integrase and the newly synthesized dsDNA copy of the retrotransposon must transit the nuclear membrane. Once in the nucleus, integrase performs the integration of the dsDNA into the host genome. This is Transposon Ty1-DR4 Gag-Pol polyprotein (TY1B-DR4) from Saccharomyces cerevisiae (strain ATCC 204508 / S288c) (Baker's yeast).